The sequence spans 203 residues: Thymidylate kinase (203 aa).

10–17 serves as a coordination point for ATP; it reads GIDGAGKS.

The protein belongs to the thymidylate kinase family.

It carries out the reaction dTMP + ATP = dTDP + ADP. Its function is as follows. Phosphorylation of dTMP to form dTDP in both de novo and salvage pathways of dTTP synthesis. The sequence is that of Thymidylate kinase from Cupriavidus necator (strain ATCC 17699 / DSM 428 / KCTC 22496 / NCIMB 10442 / H16 / Stanier 337) (Ralstonia eutropha).